The following is a 361-amino-acid chain: Chorismate synthase (361 aa).

The span at 38 to 49 (EKDMQHDLDRRR) shows a compositional bias: basic and acidic residues. Residues 38–58 (EKDMQHDLDRRRPGTSKYTTQ) form a disordered region. Residue Arg-48 coordinates NADP(+). FMN-binding positions include 125-127 (RSS), 238-239 (NA), Gly-278, 293-297 (KPTSS), and Arg-319.

Belongs to the chorismate synthase family. In terms of assembly, homotetramer. FMNH2 serves as cofactor.

It catalyses the reaction 5-O-(1-carboxyvinyl)-3-phosphoshikimate = chorismate + phosphate. It participates in metabolic intermediate biosynthesis; chorismate biosynthesis; chorismate from D-erythrose 4-phosphate and phosphoenolpyruvate: step 7/7. In terms of biological role, catalyzes the anti-1,4-elimination of the C-3 phosphate and the C-6 proR hydrogen from 5-enolpyruvylshikimate-3-phosphate (EPSP) to yield chorismate, which is the branch point compound that serves as the starting substrate for the three terminal pathways of aromatic amino acid biosynthesis. This reaction introduces a second double bond into the aromatic ring system. The polypeptide is Chorismate synthase (Photobacterium profundum (strain SS9)).